The following is a 96-amino-acid chain: Large ribosomal subunit protein uL23 (96 aa).

The protein belongs to the universal ribosomal protein uL23 family. As to quaternary structure, part of the 50S ribosomal subunit. Contacts protein L29, and trigger factor when it is bound to the ribosome.

Its function is as follows. One of the early assembly proteins it binds 23S rRNA. One of the proteins that surrounds the polypeptide exit tunnel on the outside of the ribosome. Forms the main docking site for trigger factor binding to the ribosome. In Alkaliphilus oremlandii (strain OhILAs) (Clostridium oremlandii (strain OhILAs)), this protein is Large ribosomal subunit protein uL23.